Here is a 159-residue protein sequence, read N- to C-terminus: Ribosome maturation factor RimP (159 aa).

Belongs to the RimP family.

The protein resides in the cytoplasm. In terms of biological role, required for maturation of 30S ribosomal subunits. The protein is Ribosome maturation factor RimP of Halothermothrix orenii (strain H 168 / OCM 544 / DSM 9562).